The chain runs to 435 residues: tRNA modification GTPase MnmE (435 aa).

(6S)-5-formyl-5,6,7,8-tetrahydrofolate contacts are provided by R24, E82, and K122. The 142-residue stretch at 219–360 folds into the TrmE-type G domain; it reads GFIIAIAGPP…LIAEMERRLG (142 aa). N229 lines the K(+) pocket. GTP is bound by residues 229-234, 248-254, and 273-276; these read NAGKST, SPVPGTT, and DTAG. S233 provides a ligand contact to Mg(2+). K(+) is bound by residues S248, V250, and T253. T254 is a Mg(2+) binding site. Position 435 (K435) interacts with (6S)-5-formyl-5,6,7,8-tetrahydrofolate.

It belongs to the TRAFAC class TrmE-Era-EngA-EngB-Septin-like GTPase superfamily. TrmE GTPase family. As to quaternary structure, homodimer. Heterotetramer of two MnmE and two MnmG subunits. It depends on K(+) as a cofactor.

It is found in the cytoplasm. Exhibits a very high intrinsic GTPase hydrolysis rate. Involved in the addition of a carboxymethylaminomethyl (cmnm) group at the wobble position (U34) of certain tRNAs, forming tRNA-cmnm(5)s(2)U34. The chain is tRNA modification GTPase MnmE from Azorhizobium caulinodans (strain ATCC 43989 / DSM 5975 / JCM 20966 / LMG 6465 / NBRC 14845 / NCIMB 13405 / ORS 571).